The sequence spans 884 residues: Alanine--tRNA ligase (884 aa).

4 residues coordinate Zn(2+): H562, H566, C674, and H678.

Belongs to the class-II aminoacyl-tRNA synthetase family. The cofactor is Zn(2+).

The protein resides in the cytoplasm. The enzyme catalyses tRNA(Ala) + L-alanine + ATP = L-alanyl-tRNA(Ala) + AMP + diphosphate. In terms of biological role, catalyzes the attachment of alanine to tRNA(Ala) in a two-step reaction: alanine is first activated by ATP to form Ala-AMP and then transferred to the acceptor end of tRNA(Ala). Also edits incorrectly charged Ser-tRNA(Ala) and Gly-tRNA(Ala) via its editing domain. The protein is Alanine--tRNA ligase of Rhizobium johnstonii (strain DSM 114642 / LMG 32736 / 3841) (Rhizobium leguminosarum bv. viciae).